Consider the following 475-residue polypeptide: D-lactate dehydrogenase (475 aa).

The FAD-binding PCMH-type domain maps to 43-222 (YGKARPEVLV…TELTLKVIPA (180 aa)).

Belongs to the FAD-binding oxidoreductase/transferase type 4 family. The cofactor is FAD. Zn(2+) is required as a cofactor.

The catalysed reaction is (R)-lactate + A = pyruvate + AH2. Its function is as follows. Catalyzes the dehydrogenation of (R)-lactate (D-lactate) to pyruvate. Active in vitro with the artificial electron acceptor 2,6-dichlorophenolindophenol (DCPIP), but not with NAD, NADP, or cytochrome c. Also displays a very low oxidase activity in vitro on D-lactate and L-lactate with O2 as the electron acceptor, but this activity is most likely not physiological. In Anaerostipes hadrus, this protein is D-lactate dehydrogenase.